A 162-amino-acid polypeptide reads, in one-letter code: Phosphopantetheine adenylyltransferase (162 aa).

Ser-11 lines the substrate pocket. Residues 11-12 (SF) and His-19 contribute to the ATP site. Substrate contacts are provided by Lys-43, Val-76, and Arg-90. Residues 91-93 (GLR), Glu-101, and 126-132 (HLYISSS) each bind ATP.

Belongs to the bacterial CoaD family. In terms of assembly, homohexamer. Mg(2+) serves as cofactor.

It is found in the cytoplasm. The enzyme catalyses (R)-4'-phosphopantetheine + ATP + H(+) = 3'-dephospho-CoA + diphosphate. Its pathway is cofactor biosynthesis; coenzyme A biosynthesis; CoA from (R)-pantothenate: step 4/5. Reversibly transfers an adenylyl group from ATP to 4'-phosphopantetheine, yielding dephospho-CoA (dPCoA) and pyrophosphate. This Streptococcus pneumoniae (strain Taiwan19F-14) protein is Phosphopantetheine adenylyltransferase.